The primary structure comprises 550 residues: GMP synthase [glutamine-hydrolyzing] (550 aa).

A Glutamine amidotransferase type-1 domain is found at 39-232 (RILILDFGSQ…VHKICGCGGL (194 aa)). Residue Cys-116 is the Nucleophile of the active site. Residues His-206 and Glu-208 contribute to the active site. The GMPS ATP-PPase domain maps to 233–425 (WTPEHIIDLR…LGLPHSMIYR (193 aa)). 260–266 (SGGVDSS) contributes to the ATP binding site.

In terms of assembly, homodimer.

It catalyses the reaction XMP + L-glutamine + ATP + H2O = GMP + L-glutamate + AMP + diphosphate + 2 H(+). It participates in purine metabolism; GMP biosynthesis; GMP from XMP (L-Gln route): step 1/1. In terms of biological role, catalyzes the synthesis of GMP from XMP. The sequence is that of GMP synthase [glutamine-hydrolyzing] from Acinetobacter baylyi (strain ATCC 33305 / BD413 / ADP1).